Here is a 510-residue protein sequence, read N- to C-terminus: Kynurenine 3-monooxygenase (510 aa).

It belongs to the aromatic-ring hydroxylase family. KMO subfamily. The cofactor is FAD.

Its subcellular location is the mitochondrion outer membrane. The enzyme catalyses L-kynurenine + NADPH + O2 + H(+) = 3-hydroxy-L-kynurenine + NADP(+) + H2O. It participates in cofactor biosynthesis; NAD(+) biosynthesis; quinolinate from L-kynurenine: step 1/3. In terms of biological role, catalyzes the hydroxylation of L-kynurenine (L-Kyn) to form 3-hydroxy-L-kynurenine (L-3OHKyn). Required for synthesis of quinolinic acid. The sequence is that of Kynurenine 3-monooxygenase (bna4) from Aspergillus oryzae (strain ATCC 42149 / RIB 40) (Yellow koji mold).